The sequence spans 389 residues: Probable tRNA pseudouridine synthase D 1 (389 aa).

The active-site Nucleophile is Asp63. In terms of domain architecture, TRUD spans 135-345 (GAPNYYDDQR…KYTKRPIISI (211 aa)).

This sequence belongs to the pseudouridine synthase TruD family.

The enzyme catalyses uridine(13) in tRNA = pseudouridine(13) in tRNA. Its function is as follows. Could be responsible for synthesis of pseudouridine from uracil-13 in transfer RNAs. This chain is Probable tRNA pseudouridine synthase D 1 (truD1), found in Methanococcus maripaludis (strain DSM 14266 / JCM 13030 / NBRC 101832 / S2 / LL).